An 806-amino-acid chain; its full sequence is Acetyl-CoA decarbonylase/synthase complex subunit alpha 1 (806 aa).

Positions 73, 76, 77, 79, 84, and 94 each coordinate [4Fe-4S] cluster. His-117 contributes to the CO binding site. His-250, Cys-278, and Cys-323 together coordinate [Ni-4Fe-4S] cluster. 4Fe-4S ferredoxin-type domains follow at residues 407-436 and 445-475; these read DEQMKEWVDKCADCGSCYLVCPEELEIPEA and YSYLVDLHDQCIGCRRCEQVCKKEIPILSVI. [4Fe-4S] cluster-binding residues include Cys-417, Cys-420, Cys-423, Cys-427, Cys-455, Cys-458, Cys-461, and Cys-465. 3 residues coordinate [Ni-4Fe-4S] cluster: Cys-523, Cys-552, and Cys-587.

It belongs to the Ni-containing carbon monoxide dehydrogenase family. In terms of assembly, heterotetramer of two alpha and two epsilon subunits. The ACDS complex is made up of alpha, epsilon, beta, gamma and delta subunits with a probable stoichiometry of (alpha(2)epsilon(2))(4)-beta(8)-(gamma(1)delta(1))(8). The cofactor is [4Fe-4S] cluster. [Ni-4Fe-4S] cluster serves as cofactor.

It catalyses the reaction CO + 2 oxidized [2Fe-2S]-[ferredoxin] + H2O = 2 reduced [2Fe-2S]-[ferredoxin] + CO2 + 2 H(+). It functions in the pathway one-carbon metabolism; methanogenesis from acetate. Its function is as follows. Part of the ACDS complex that catalyzes the reversible cleavage of acetyl-CoA, allowing growth on acetate as sole source of carbon and energy. The alpha-epsilon subcomponent functions as a carbon monoxide dehydrogenase. The chain is Acetyl-CoA decarbonylase/synthase complex subunit alpha 1 from Methanosarcina thermophila.